The following is a 99-amino-acid chain: Protein IDA-LIKE 3 (99 aa).

The signal sequence occupies residues 1–32; the sequence is MSSRSHRSRKYQLTRTIPILVLLLVLLSCCNG. Positions 36 to 45 are enriched in polar residues; it reads TNVFNTSSPP. 2 disordered regions span residues 36–58 and 73–99; these read TNVF…HDHV and SLPR…STKT. A compositionally biased stretch (basic and acidic residues) spans 46-58; it reads KQKDVVSPPHDHV.

In terms of tissue distribution, expressed in flowers and seedlings. Detected at the base of pedicel, in the floral abscission zone and in vascular tissues.

It localises to the secreted. It is found in the extracellular space. Its function is as follows. May be involved in floral abscission. The chain is Protein IDA-LIKE 3 (IDL3) from Arabidopsis thaliana (Mouse-ear cress).